Here is a 2364-residue protein sequence, read N- to C-terminus: Cytotoxin-L (2364 aa).

The four-helical bundle stretch occupies residues 1 to 91; the sequence is MNLVNKAQLQ…EVLELKNNSL (91 aa). The GT44 domain maps to 96–468; that stretch reads KNLHFIWIGG…APDVRSTINL (373 aa). The interval 96 to 468 is glucosyltransferase region; the sequence is KNLHFIWIGG…APDVRSTINL (373 aa). Residues 101 to 103, Asn139, 265 to 270, and 286 to 288 each bind UDP-alpha-D-glucose; these read IWI, LAAASD, and DVD. 3 residues coordinate Mg(2+): Asp288, Glu515, and Ser518. 518–520 is a binding site for UDP-alpha-D-glucose; it reads SLW. Residues 544-799 form an autoprocessing region region; it reads GEDDNLDFAQ…KSKYLHELST (256 aa). Glu545 and Asp546 together coordinate Zn(2+). Residues 567–774 enclose the Peptidase C80 domain; the sequence is LSSMKTRNKE…EESIIKDISS (208 aa). 1D-myo-inositol hexakisphosphate-binding residues include Tyr577, Lys600, and Lys647. His653 is a binding site for Zn(2+). His653 (for protease activity) is an active-site residue. The active-site Nucleophile; for protease activity is the Cys698. His757 lines the Zn(2+) pocket. Positions 764, 775, and 792 each coordinate 1D-myo-inositol hexakisphosphate. The translocation region stretch occupies residues 800–1500; sequence LLQEIRNNAN…ESIIRNIYMP (701 aa). Interaction with host SEMA6A and SEMA6B regions lie at residues 1433 to 1438, 1466 to 1471, 1484 to 1495, 1504 to 1511, and 1596 to 1601; these read CMKLIE, DNETKY, FTAEFSNESIIR, NLFIYSSK, and YNNLDP. Cell wall-binding repeat units follow at residues 1813 to 1832, 1833 to 1852, 1854 to 1873, 1876 to 1895, 1926 to 1945, 1946 to 1965, 1967 to 1986, 1987 to 2006, 2007 to 2026, 2057 to 2076, 2077 to 2097, 2099 to 2118, 2119 to 2138, 2139 to 2158, 2209 to 2224, 2227 to 2249, 2250 to 2269, 2270 to 2289, 2320 to 2339, and 2340 to 2359; these read EFGL…FGNM, VSGL…PKNN, ITGF…TKSG, SIGE…QGIL, FIGK…NYRA, AVEW…KTGE, LKGL…NGIM, QTGF…DGVM, QVGY…NGER, YNGI…SNTA, VVGW…NTAE, CIGL…NGIR, QLGF…SGKI, ELGY…SGLV, ETGW…YFDP, KKAY…NGIM, RTGL…DGKM, QFGY…DGKM, YTGW…EYIA, and ATGS…DTAE. A receptor-binding (CROPS) region region spans residues 1835–2364; it reads GLIYINDSLY…PDTAELVVSE (530 aa).

Belongs to the clostridial glucosylating toxin (LCGT) family. In terms of assembly, homomultimer; forms an inactive homomultimer at pH 8, which dissociates at pH 4, leading to cytotoxicity. Interacts with host SEMA6A; interaction promotes toxin entry into host cell. Interacts with host SEMA6B; interaction promotes toxin entry into host cell. Zn(2+) serves as cofactor. The cofactor is Mn(2+). Mg(2+) is required as a cofactor. Undergoes autocatalytic cleavage to release the N-terminal part (Glucosyltransferase TcsL), which constitutes the active part of the toxin, in the host cytosol. 1D-myo-inositol hexakisphosphate-binding (InsP6) activates the peptidase C80 domain and promotes autoprocessing.

The protein localises to the secreted. The protein resides in the host endosome membrane. Its subcellular location is the host cytoplasm. It localises to the host cytosol. It is found in the host cell membrane. The catalysed reaction is L-threonyl-[protein] + UDP-alpha-D-glucose = 3-O-(alpha-D-glucosyl)-L-threonyl-[protein] + UDP + H(+). Protease activity is activated upon binding to 1D-myo-inositol hexakisphosphate (InsP6), which induces conformational reorganization. Functionally, precursor of a cytotoxin that targets the vascular endothelium, inducing an anti-inflammatory effect and resulting in lethal toxic shock syndrome. TcsL constitutes the main toxin that mediates the pathology of P.sordellii infection, an anaerobic Gram-positive bacterium found in soil and in the gastrointestinal and vaginal tracts of animals and humans; although the majority of carriers are asymptomatic, pathogenic P.sordellii infections arise rapidly and are highly lethal. This form constitutes the precursor of the toxin: it enters into host cells and mediates autoprocessing to release the active toxin (Glucosyltransferase TcsL) into the host cytosol. Targets vascular endothelium by binding to the semaphorin proteins SEMA6A and SEMA6B, and enters host cells via clathrin-mediated endocytosis. Once entered into host cells, acidification in the endosome promotes the membrane insertion of the translocation region and formation of a pore, leading to translocation of the GT44 and peptidase C80 domains across the endosomal membrane. This activates the peptidase C80 domain and autocatalytic processing, releasing the N-terminal part (Glucosyltransferase TcsL), which constitutes the active part of the toxin, in the cytosol. In terms of biological role, active form of the toxin, which is released into the host cytosol following autoprocessing and inactivates small GTPases. Acts by mediating monoglucosylation of small GTPases of the Ras (H-Ras/HRAS, K-Ras/KRAS and N-Ras/NRAS) family in host cells at the conserved threonine residue located in the switch I region ('Thr-37/35'), using UDP-alpha-D-glucose as the sugar donor. Also able to catalyze monoglucosylation of some members of the Rho family (Rac1 and Rap2A), but with less efficiency than with Ras proteins. Monoglucosylation of host small GTPases completely prevents the recognition of the downstream effector, blocking the GTPases in their inactive form and leading to apoptosis. Induces an anti-inflammatory effect, mainly by inactivating Ras proteins which results in blockage of the cell cycle and killing of immune cells. The absence or moderate local inflammatory response allows C.sordellii spreading in deep tissues, production of toxin which is released in the general circulation and causes a toxic shock syndrome. The polypeptide is Cytotoxin-L (Paraclostridium sordellii (strain ATCC 9714 / DSM 2141 / JCM 3814 / LMG 15708 / NCIMB 10717 / 211) (Clostridium sordellii)).